Here is a 341-residue protein sequence, read N- to C-terminus: Peroxisomal membrane protein PEX14 (341 aa).

N-acetylserine is present on Ser2. The short motif at 86–94 (PPTLPHRDW) is the SH3-binding element. The tract at residues 276–341 (MQEESDKEKE…QNGQVEDSIP (66 aa)) is disordered. Over residues 279-295 (ESDKEKENGSDANKDDN) the composition is skewed to basic and acidic residues. Positions 308 to 341 (IDSNASIPEWQKNTAANEISVPDWQNGQVEDSIP) are enriched in polar residues. At Ser313 the chain carries Phosphoserine.

The protein belongs to the peroxin-14 family. In terms of assembly, interacts with PEX13 (via SH3 domain); forming the PEX13-PEX14 docking complex. Interacts with PEX5 (via WxxxF/Y motifs). Interacts with PEX7. Interacts with PEX9.

The protein localises to the peroxisome membrane. Component of the PEX13-PEX14 docking complex, a translocon channel that specifically mediates the import of peroxisomal cargo proteins bound to PEX5 or PEX21 receptors. The PEX13-PEX14 docking complex forms a large import pore which can be opened to a diameter of about 9 nm. Mechanistically, PEX5 (or PEX21) receptor along with cargo proteins associates with the PEX14 subunit of the PEX13-PEX14 docking complex in the cytosol, leading to the insertion of the receptor into the organelle membrane with the concomitant translocation of the cargo into the peroxisome matrix. The protein is Peroxisomal membrane protein PEX14 of Saccharomyces cerevisiae (strain ATCC 204508 / S288c) (Baker's yeast).